Consider the following 117-residue polypeptide: Phosphoribosyl-ATP pyrophosphatase (117 aa).

Basic and acidic residues predominate over residues 96-105 (GVSGIEEKLS). Residues 96–117 (GVSGIEEKLSRSQNQPEPTKAE) form a disordered region. Over residues 106 to 117 (RSQNQPEPTKAE) the composition is skewed to polar residues.

The protein belongs to the PRA-PH family.

It is found in the cytoplasm. It carries out the reaction 1-(5-phospho-beta-D-ribosyl)-ATP + H2O = 1-(5-phospho-beta-D-ribosyl)-5'-AMP + diphosphate + H(+). The protein operates within amino-acid biosynthesis; L-histidine biosynthesis; L-histidine from 5-phospho-alpha-D-ribose 1-diphosphate: step 2/9. The sequence is that of Phosphoribosyl-ATP pyrophosphatase from Nitrosomonas eutropha (strain DSM 101675 / C91 / Nm57).